A 443-amino-acid chain; its full sequence is ATP-dependent protease ATPase subunit HslU (443 aa).

ATP is bound by residues I18, 60 to 65, D256, E321, and R393; that span reads GVGKTE.

The protein belongs to the ClpX chaperone family. HslU subfamily. As to quaternary structure, a double ring-shaped homohexamer of HslV is capped on each side by a ring-shaped HslU homohexamer. The assembly of the HslU/HslV complex is dependent on binding of ATP.

It is found in the cytoplasm. Functionally, ATPase subunit of a proteasome-like degradation complex; this subunit has chaperone activity. The binding of ATP and its subsequent hydrolysis by HslU are essential for unfolding of protein substrates subsequently hydrolyzed by HslV. HslU recognizes the N-terminal part of its protein substrates and unfolds these before they are guided to HslV for hydrolysis. The protein is ATP-dependent protease ATPase subunit HslU of Yersinia pestis bv. Antiqua (strain Antiqua).